The following is an 888-amino-acid chain: Lon protease homolog 2, peroxisomal (888 aa).

Residues 11-255 (LAILPFRNKV…KATELVDRHL (245 aa)) enclose the Lon N-terminal domain. Residue 408–415 (GPPGVGKT) participates in ATP binding. The region spanning 692–877 (VASAGVSVGL…EDVLENAFEG (186 aa)) is the Lon proteolytic domain. Residues Ser783 and Lys826 contribute to the active site. Positions 886–888 (SKL) match the Microbody targeting signal motif.

Belongs to the peptidase S16 family.

The protein localises to the peroxisome matrix. It carries out the reaction Hydrolysis of proteins in presence of ATP.. ATP-dependent serine protease that mediates the selective degradation of misfolded and unassembled polypeptides in the peroxisomal matrix. Necessary for type 2 peroxisome targeting signal (PTS2)-containing protein processing and facilitates peroxisome matrix protein import. In Arabidopsis thaliana (Mouse-ear cress), this protein is Lon protease homolog 2, peroxisomal (LON2).